Here is a 70-residue protein sequence, read N- to C-terminus: Exodeoxyribonuclease 7 small subunit (70 aa).

The protein belongs to the XseB family. In terms of assembly, heterooligomer composed of large and small subunits.

The protein localises to the cytoplasm. It carries out the reaction Exonucleolytic cleavage in either 5'- to 3'- or 3'- to 5'-direction to yield nucleoside 5'-phosphates.. Its function is as follows. Bidirectionally degrades single-stranded DNA into large acid-insoluble oligonucleotides, which are then degraded further into small acid-soluble oligonucleotides. This Magnetococcus marinus (strain ATCC BAA-1437 / JCM 17883 / MC-1) protein is Exodeoxyribonuclease 7 small subunit.